The chain runs to 220 residues: Histone deacetylase complex subunit SAP30 (220 aa).

The interaction with NCOR1 stretch occupies residues 1–129 (MNGFTPEEMS…QSVRNRRKRK (129 aa)). Threonine 5 carries the phosphothreonine modification. The Atypical zinc-finger motif lies at 67-115 (CCLREDGERCGRAAGNASFSKRIQKSISQKKVKIELDKSARHLYICDYH). Lysine 87 participates in a covalent cross-link: Glycyl lysine isopeptide (Lys-Gly) (interchain with G-Cter in SUMO2). Residues 123 to 143 (RNRRKRKGSDDDGGDSPVQDI) are disordered. The interaction with SIN3A stretch occupies residues 130–220 (GSDDDGGDSP…SDLKADSGVH (91 aa)). Serine 131 and serine 138 each carry phosphoserine. Phosphothreonine is present on threonine 145. Glycyl lysine isopeptide (Lys-Gly) (interchain with G-Cter in SUMO2) cross-links involve residues lysine 194 and lysine 214.

The protein belongs to the SAP30 family. In terms of assembly, component of the histone deacetylase complex that includes at least SIN3A, HDAC1 and HDAC2. Found in a complex composed of at least SINHCAF, SIN3A, HDAC1, SAP30, RBBP4, OGT and TET1. Interacts with HDAC1. Interacts with SIN3A, SIN3B, HDAC2, RBBP4 and NCOR1. Interacts directly with SAMSN1. Interacts with HCFC1. Interacts with SAP30BP.

The protein localises to the nucleus. Involved in the functional recruitment of the Sin3-histone deacetylase complex (HDAC) to a specific subset of N-CoR corepressor complexes. Capable of transcription repression by N-CoR. Active in deacetylating core histone octamers (when in a complex) but inactive in deacetylating nucleosomal histones. This chain is Histone deacetylase complex subunit SAP30, found in Mus musculus (Mouse).